The chain runs to 387 residues: Protein RecA, chromosomal (387 aa).

80 to 87 (GPESSGKT) provides a ligand contact to ATP. Positions 352–387 (EVAETTEDTSTKAKATKAKKEEKVVETEEIELELED) are disordered. The segment covering 378-387 (TEEIELELED) has biased composition (acidic residues).

It belongs to the RecA family.

Its subcellular location is the cytoplasm. Functionally, can catalyze the hydrolysis of ATP in the presence of single-stranded DNA, the ATP-dependent uptake of single-stranded DNA by duplex DNA, and the ATP-dependent hybridization of homologous single-stranded DNAs. It interacts with LexA causing its activation and leading to its autocatalytic cleavage. The polypeptide is Protein RecA, chromosomal (Lactococcus lactis subsp. lactis (strain IL1403) (Streptococcus lactis)).